The sequence spans 542 residues: LysM domain-containing protein ARB_00327 (542 aa).

An N-terminal signal peptide occupies residues 1–35 (MLSSVLFPAMRTLLLLKYVFSLISLSAICCQTVSA). Residues N218, N298, N381, and N415 are each glycosylated (N-linked (GlcNAc...) asparagine). The LysM 1 domain occupies 264-310 (RWYGVKKGDYCNLIVLKFGITMDNFIFLNPALNSNCTNLYAEESYCV). Positions 439–484 (DSDEPTPTTPITTSDDPTSTSATPTTPTTSSKPSPGAPTMTGQPSA) are disordered. Low complexity predominate over residues 443–472 (PTPTTPITTSDDPTSTSATPTTPTTSSKPS). Residues 487-534 (KWHTVTNGESCTVIPKTFGITLEQFLAWNPTVKSDCTENFWAGYAYCV) enclose the LysM 2 domain.

The protein resides in the secreted. Its function is as follows. Might have a role in sequestration of chitin oligosaccharides (breakdown products of fungal cell walls that are released during invasion and act as triggers of host immunity) to dampen host defense. In Arthroderma benhamiae (strain ATCC MYA-4681 / CBS 112371) (Trichophyton mentagrophytes), this protein is LysM domain-containing protein ARB_00327.